The primary structure comprises 219 residues: Large ribosomal subunit protein uL3 (219 aa).

Residues 140 to 163 (SASHGAHRNHRKPGSIGASSTPSR) are disordered.

This sequence belongs to the universal ribosomal protein uL3 family. Part of the 50S ribosomal subunit. Forms a cluster with proteins L14 and L19.

In terms of biological role, one of the primary rRNA binding proteins, it binds directly near the 3'-end of the 23S rRNA, where it nucleates assembly of the 50S subunit. This chain is Large ribosomal subunit protein uL3, found in Leifsonia xyli subsp. xyli (strain CTCB07).